Reading from the N-terminus, the 911-residue chain is Protein translocase subunit SecA (911 aa).

ATP-binding positions include Q87, 105 to 109 (GEGKT), and D512. A compositionally biased stretch (basic and acidic residues) spans 561 to 571 (RHESRRIDNQL). Positions 561-583 (RHESRRIDNQLRGRSGRQGDPGS) are disordered. The Zn(2+) site is built by C895, C897, C906, and H907.

It belongs to the SecA family. In terms of assembly, monomer and homodimer. Part of the essential Sec protein translocation apparatus which comprises SecA, SecYEG and auxiliary proteins SecDF-YajC and YidC. The cofactor is Zn(2+).

It is found in the cell inner membrane. The protein localises to the cytoplasm. It carries out the reaction ATP + H2O + cellular proteinSide 1 = ADP + phosphate + cellular proteinSide 2.. In terms of biological role, part of the Sec protein translocase complex. Interacts with the SecYEG preprotein conducting channel. Has a central role in coupling the hydrolysis of ATP to the transfer of proteins into and across the cell membrane, serving both as a receptor for the preprotein-SecB complex and as an ATP-driven molecular motor driving the stepwise translocation of polypeptide chains across the membrane. The protein is Protein translocase subunit SecA of Pseudomonas putida (strain W619).